Reading from the N-terminus, the 632-residue chain is tRNA uridine 5-carboxymethylaminomethyl modification enzyme MnmG (632 aa).

Residues 13–18, Val125, and Ser180 each bind FAD; that span reads GGGHAG. Residue 273–287 participates in NAD(+) binding; that stretch reads GPRYCPSIEDKINRF. Residue Gln370 coordinates FAD.

This sequence belongs to the MnmG family. As to quaternary structure, homodimer. Heterotetramer of two MnmE and two MnmG subunits. FAD serves as cofactor.

Its subcellular location is the cytoplasm. NAD-binding protein involved in the addition of a carboxymethylaminomethyl (cmnm) group at the wobble position (U34) of certain tRNAs, forming tRNA-cmnm(5)s(2)U34. The polypeptide is tRNA uridine 5-carboxymethylaminomethyl modification enzyme MnmG (Shewanella sediminis (strain HAW-EB3)).